The sequence spans 48 residues: Small, acid-soluble spore protein P (48 aa).

The span at 1-19 (MTNKNTGKDIRQNSPKEHQ) shows a compositional bias: basic and acidic residues. The tract at residues 1-48 (MTNKNTGKDIRQNSPKEHQSGQPEPLSGSKKVKNRNHTRQKHNSHHDM) is disordered. The span at 30–48 (KKVKNRNHTRQKHNSHHDM) shows a compositional bias: basic residues.

This sequence belongs to the SspP family.

The protein resides in the spore core. This Bacillus pumilus (strain SAFR-032) protein is Small, acid-soluble spore protein P.